We begin with the raw amino-acid sequence, 323 residues long: Zinc finger protein 784 (323 aa).

The interval 1–26 (MAAARPEAQSRSSPTPESRSQEPLDL) is disordered. Polar residues predominate over residues 9–18 (QSRSSPTPES). A Phosphoserine modification is found at Ser13. 6 C2H2-type zinc fingers span residues 65-87 (FHCA…EHGH), 101-123 (SRCH…YSLH), 129-151 (YRCA…QHRH), 196-218 (FACR…ERVH), 224-246 (YHCG…ARIH), and 252-274 (FRCT…QRTH). A disordered region spans residues 269-323 (KHQRTHFHGPGPGLGDSGGQLGSSAAEGSGSGCGVGDPAEEGRGETAKVKVEADQ). Positions 278-289 (PGPGLGDSGGQL) are enriched in gly residues. The segment covering 308-323 (EEGRGETAKVKVEADQ) has biased composition (basic and acidic residues). Residue Lys318 forms a Glycyl lysine isopeptide (Lys-Gly) (interchain with G-Cter in SUMO2) linkage.

It belongs to the krueppel C2H2-type zinc-finger protein family.

It localises to the nucleus. In terms of biological role, may be involved in transcriptional regulation. This Homo sapiens (Human) protein is Zinc finger protein 784 (ZNF784).